The following is a 319-amino-acid chain: tRNA uridine(34) hydroxylase (319 aa).

One can recognise a Rhodanese domain in the interval 133-231 (EDPNSVVIDT…YLEDVSSENS (99 aa)). C191 acts as the Cysteine persulfide intermediate in catalysis.

It belongs to the TrhO family.

It carries out the reaction uridine(34) in tRNA + AH2 + O2 = 5-hydroxyuridine(34) in tRNA + A + H2O. Its function is as follows. Catalyzes oxygen-dependent 5-hydroxyuridine (ho5U) modification at position 34 in tRNAs. The protein is tRNA uridine(34) hydroxylase of Prochlorococcus marinus (strain NATL2A).